A 506-amino-acid polypeptide reads, in one-letter code: Cobyric acid synthase (506 aa).

Residues Asp251 to Phe448 form the GATase cobBQ-type domain. Cys332 acts as the Nucleophile in catalysis. His440 is an active-site residue.

It belongs to the CobB/CobQ family. CobQ subfamily.

The protein operates within cofactor biosynthesis; adenosylcobalamin biosynthesis. Its function is as follows. Catalyzes amidations at positions B, D, E, and G on adenosylcobyrinic A,C-diamide. NH(2) groups are provided by glutamine, and one molecule of ATP is hydrogenolyzed for each amidation. The polypeptide is Cobyric acid synthase (Citrobacter koseri (strain ATCC BAA-895 / CDC 4225-83 / SGSC4696)).